The sequence spans 671 residues: NADPH--cytochrome P450 reductase (671 aa).

Topologically, residues 1-14 (MSAEHVEEVVSEEP) are lumenal. A helical transmembrane segment spans residues 15–35 (FLGTLDIALLVVLLVGATWYF). The Cytoplasmic segment spans residues 36–671 (MRSRKKEEAP…QKRYSADVWS (636 aa)). In terms of domain architecture, Flavodoxin-like spans 77-221 (LVVFYGSQTG…DFITWKDRFW (145 aa)). FMN is bound by residues 83-88 (SQTGTA), 135-138 (ATYG), 170-179 (LGNKTYEHYN), and D205. One can recognise an FAD-binding FR-type domain in the interval 276-515 (KNPFLASVIV…FIRKSQFRLP (240 aa)). R295 is an NADP(+) binding site. Residues 451–454 (RYYS), 469–471 (TAV), Y475, and 485–488 (GVAT) contribute to the FAD site. NADP(+)-binding positions include T529, 589–590 (SR), 595–599 (KIYVT), and D632. Position 670 (W670) interacts with FAD.

It belongs to the NADPH--cytochrome P450 reductase family. In the N-terminal section; belongs to the flavodoxin family. The protein in the C-terminal section; belongs to the flavoprotein pyridine nucleotide cytochrome reductase family. It depends on FAD as a cofactor. The cofactor is FMN.

Its subcellular location is the endoplasmic reticulum membrane. It carries out the reaction 2 oxidized [cytochrome P450] + NADPH = 2 reduced [cytochrome P450] + NADP(+) + H(+). This enzyme is required for electron transfer from NADP to cytochrome P450 in microsomes. It can also provide electron transfer to heme oxygenase and cytochrome B5. The sequence is that of NADPH--cytochrome P450 reductase from Musca domestica (House fly).